The chain runs to 147 residues: Low molecular weight protein-tyrosine-phosphatase Wzb (147 aa).

C9 acts as the Nucleophile in catalysis. R15 is an active-site residue. The Proton donor role is filled by D115.

This sequence belongs to the low molecular weight phosphotyrosine protein phosphatase family.

The enzyme catalyses O-phospho-L-tyrosyl-[protein] + H2O = L-tyrosyl-[protein] + phosphate. It functions in the pathway glycan metabolism; exopolysaccharide biosynthesis. Functionally, dephosphorylates Wzc. Required for the extracellular polysaccharide colanic acid synthesis. Probably involved in the export of colanic acid from the cell to medium. Involved in protection of cells against contact-dependent growth inhibition (CDI). In Escherichia coli O157:H7, this protein is Low molecular weight protein-tyrosine-phosphatase Wzb (wzb).